The primary structure comprises 300 residues: Succinate--CoA ligase [ADP-forming] subunit alpha (300 aa).

Residues 17–20 (TGST), K43, and 96–98 (ITE) contribute to the CoA site. Residue Y159 coordinates substrate. The Tele-phosphohistidine intermediate role is filled by H247.

This sequence belongs to the succinate/malate CoA ligase alpha subunit family. In terms of assembly, heterotetramer of two alpha and two beta subunits.

The enzyme catalyses succinate + ATP + CoA = succinyl-CoA + ADP + phosphate. It catalyses the reaction GTP + succinate + CoA = succinyl-CoA + GDP + phosphate. It participates in carbohydrate metabolism; tricarboxylic acid cycle; succinate from succinyl-CoA (ligase route): step 1/1. Succinyl-CoA synthetase functions in the citric acid cycle (TCA), coupling the hydrolysis of succinyl-CoA to the synthesis of either ATP or GTP and thus represents the only step of substrate-level phosphorylation in the TCA. The alpha subunit of the enzyme binds the substrates coenzyme A and phosphate, while succinate binding and nucleotide specificity is provided by the beta subunit. The sequence is that of Succinate--CoA ligase [ADP-forming] subunit alpha from Bacillus subtilis (strain 168).